Consider the following 975-residue polypeptide: E3 ubiquitin-protein ligase NEDD4-like (975 aa).

A2 bears the N-acetylalanine mark. The 123-residue stretch at 4-126 (GLGEPVYGLS…TEDPTMERPY (123 aa)) folds into the C2 domain. Disordered regions lie at residues 178-202 (DSND…WEEK), 244-272 (AAHR…VPEP), and 285-312 (DSLG…EELS). Positions 193-226 (PPLPPGWEEKVDNLGRTYYVNHNNRTTQWHRPSL) constitute a WW 1 domain. S312 is modified (phosphoserine). T318 carries the phosphothreonine modification. Position 342 is a phosphoserine; by WNK1 and WNK4 (S342). Disordered regions lie at residues 349 to 393 (EQGH…GWEE) and 424 to 496 (GASG…KVTQ). T367 is modified (phosphothreonine; by SGK1). A WW 2 domain is found at 385 to 418 (PGLPSGWEERKDAKGRTYYVNHNNRTTTWTRPIM). Position 446 is a phosphoserine (S446). S448 is modified (phosphoserine; by PKA and SGK1). S449 bears the Phosphoserine; by WNK1 and WNK4 mark. Residues 460 to 471 (GAKDSPVRRAVK) show a composition bias toward basic and acidic residues. Phosphoserine is present on residues S464, S475, S479, S483, and S487. 2 consecutive WW domains span residues 497 to 530 (SFLP…DPRL) and 548 to 581 (GPLP…DPRL). Residues 640-974 (RPDVLKARLW…VENAQGFEGV (335 aa)) enclose the HECT domain. C942 functions as the Glycyl thioester intermediate in the catalytic mechanism.

Interacts with UBE2E3. Interacts with NDFIP1; this interaction activates the E3 ubiquitin-protein ligase. Interacts with NDFIP2; this interaction activates the E3 ubiquitin-protein ligase. Interacts (via WW domains) with SCN1A. Interacts (via WW domains) with SCN2A. Interacts (via WW domains) with SCN3A. Interacts (via WW domains) with SCN5A. Interacts (via WW domains) with SCN8A. Interacts (via WW domains) with SCN9A. Interacts (via WW domains) with SCN10A. Interacts (via WW domains) with CLCN5. Interacts with SMAD2. Interacts with SMAD3. Interacts with SMAD6. Interacts with SMAD7. The phosphorylated form interacts with 14-3-3 proteins. Interacts with TNK2. Interacts with WNK1. Interacts with SGK1. Interacts (via C2 domain) with NPC2. Interacts with ARRDC4. Interacts with KCNQ1; promotes internalization of KCNQ1. Interacts (via domains WW1, 3 and 4) with USP36; the interaction inhibits ubiquitination of, at least, NTRK1, KCNQ2 and KCNQ3 by NEDD4L. Interacts with PRRG4 (via cytoplasmic domain). Interacts with LDLRAD3; the interaction is direct. Interacts with UBE2D2. Interacts with TTYH2 and TTYH3. As to quaternary structure, (Microbial infection) Interacts with Epstein-Barr virus LMP2A. In terms of processing, phosphorylated by SGK1 or PKA; which impairs interaction with SCNN. Interaction with YWHAH inhibits dephosphorylation. Post-translationally, auto-ubiquitinated. Deubiquitinated by USP36, no effect on NEDD4L protein levels. Both proteins interact and regulate each other's ubiquitination levels. Ubiquitously expressed, with highest levels in prostate, pancreas, and kidney. Expressed in melanocytes.

The protein localises to the cytoplasm. The protein resides in the golgi apparatus. It is found in the endosome. It localises to the multivesicular body. The enzyme catalyses S-ubiquitinyl-[E2 ubiquitin-conjugating enzyme]-L-cysteine + [acceptor protein]-L-lysine = [E2 ubiquitin-conjugating enzyme]-L-cysteine + N(6)-ubiquitinyl-[acceptor protein]-L-lysine.. The catalysed reaction is [E2 ubiquitin-conjugating enzyme]-S-ubiquitinyl-L-cysteine + [acceptor protein]-L-cysteine = [E2 ubiquitin-conjugating enzyme]-L-cysteine + [acceptor protein]-S-ubiquitinyl-L-cysteine.. The protein operates within protein modification; protein ubiquitination. Activated by NDFIP1- and NDFIP2-binding. Functionally, E3 ubiquitin-protein ligase that mediates the polyubiquitination of lysine and cysteine residues on target proteins and is thereby implicated in the regulation of various signaling pathways including autophagy, innate immunity or DNA repair. Inhibits TGF-beta signaling by triggering SMAD2 and TGFBR1 ubiquitination and proteasome-dependent degradation. Downregulates autophagy and cell growth by ubiquitinating and reducing cellular ULK1 or ASCT2 levels. Promotes ubiquitination and internalization of various plasma membrane channels such as ENaC, SCN2A/Nav1.2, SCN3A/Nav1.3, SCN5A/Nav1.5, SCN9A/Nav1.7, SCN10A/Nav1.8, KCNA3/Kv1.3, KCNH2, EAAT1, KCNQ2/Kv7.2, KCNQ3/Kv7.3 or CLC5. Promotes ubiquitination and degradation of SGK1 and TNK2. Ubiquitinates BRAT1 and this ubiquitination is enhanced in the presence of NDFIP1. Plays a role in dendrite formation by melanocytes. Involved in the regulation of TOR signaling. Ubiquitinates and regulates protein levels of NTRK1 once this one is activated by NGF. Plays a role in antiviral innate immunity by catalyzing 'Lys-29'-linked cysteine ubiquitination of TRAF3, resulting in enhanced 'Lys-48' and 'Lys-63'-linked ubiquitination of TRAF3. Ubiquitinates TTYH2 and TTYH3 and regulates protein levels of TTYH2. This is E3 ubiquitin-protein ligase NEDD4-like from Homo sapiens (Human).